The sequence spans 455 residues: Probable glycine dehydrogenase (decarboxylating) subunit 1 (455 aa).

This sequence belongs to the GcvP family. N-terminal subunit subfamily. In terms of assembly, the glycine cleavage system is composed of four proteins: P, T, L and H. In this organism, the P 'protein' is a heterodimer of two subunits.

The enzyme catalyses N(6)-[(R)-lipoyl]-L-lysyl-[glycine-cleavage complex H protein] + glycine + H(+) = N(6)-[(R)-S(8)-aminomethyldihydrolipoyl]-L-lysyl-[glycine-cleavage complex H protein] + CO2. Its function is as follows. The glycine cleavage system catalyzes the degradation of glycine. The P protein binds the alpha-amino group of glycine through its pyridoxal phosphate cofactor; CO(2) is released and the remaining methylamine moiety is then transferred to the lipoamide cofactor of the H protein. This is Probable glycine dehydrogenase (decarboxylating) subunit 1 from Saccharolobus solfataricus (strain ATCC 35092 / DSM 1617 / JCM 11322 / P2) (Sulfolobus solfataricus).